The primary structure comprises 606 residues: Scavenger receptor class A member 3 (606 aa).

The Cytoplasmic portion of the chain corresponds to 1–56 (MKVRSAGGDGDALCVTEEDLAGDDEDMPTFPCTQKGRPGPRCSRCQKNLSLHTSVR). A helical; Signal-anchor for type II membrane protein membrane pass occupies residues 57-77 (ILYLFLALLLVAVAVLASLVF). The Extracellular segment spans residues 78 to 606 (RKVDSLSEDI…PGPPGSQSFY (529 aa)). Residues asparagine 115, asparagine 182, asparagine 224, asparagine 257, asparagine 313, asparagine 337, asparagine 365, asparagine 400, asparagine 430, and asparagine 451 are each glycosylated (N-linked (GlcNAc...) asparagine). The segment at 454–606 (ILRGAPGPPG…PGPPGSQSFY (153 aa)) is disordered. Residues 455-513 (LRGAPGPPGPRGFKGDMGVKGPVGGRGPKGDPGSLGPLGPQGPQGQPGEAGPVGERGPV) form the Collagen-like 1 domain. Residues 485–519 (DPGSLGPLGPQGPQGQPGEAGPVGERGPVGPRGFP) show a composition bias toward low complexity. Gly residues predominate over residues 526–535 (GSFGTGGPRG). The Collagen-like 2 domain occupies 544–603 (GPPGPEGPPGSPGPSGPQGKPGIAGKTGSPGQRGAMGPKGEPGIQGPPGLPGPPGPPGSQ). Composition is skewed to pro residues over residues 545–558 (PPGPEGPPGSPGPS) and 591–600 (PGLPGPPGPP).

As to expression, expressed ubiquitously.

Its subcellular location is the endoplasmic reticulum membrane. It is found in the golgi apparatus membrane. Seems to protect cells by scavenging oxidative molecules or harmful products of oxidation. The sequence is that of Scavenger receptor class A member 3 (SCARA3) from Homo sapiens (Human).